Consider the following 295-residue polypeptide: Energy-coupling factor transporter ATP-binding protein EcfA2 (295 aa).

One can recognise an ABC transporter domain in the interval isoleucine 3 to glycine 246. Glycine 40–serine 47 contributes to the ATP binding site.

It belongs to the ABC transporter superfamily. Energy-coupling factor EcfA family. Forms a stable energy-coupling factor (ECF) transporter complex composed of 2 membrane-embedded substrate-binding proteins (S component), 2 ATP-binding proteins (A component) and 2 transmembrane proteins (T component).

Its subcellular location is the cell membrane. In terms of biological role, ATP-binding (A) component of a common energy-coupling factor (ECF) ABC-transporter complex. Unlike classic ABC transporters this ECF transporter provides the energy necessary to transport a number of different substrates. The protein is Energy-coupling factor transporter ATP-binding protein EcfA2 of Lactiplantibacillus plantarum (strain ATCC BAA-793 / NCIMB 8826 / WCFS1) (Lactobacillus plantarum).